Here is a 156-residue protein sequence, read N- to C-terminus: Ribosomal RNA large subunit methyltransferase H (156 aa).

S-adenosyl-L-methionine contacts are provided by residues Leu73, Gly104, and 123 to 128; that span reads IGPLTL.

This sequence belongs to the RNA methyltransferase RlmH family. In terms of assembly, homodimer.

Its subcellular location is the cytoplasm. It catalyses the reaction pseudouridine(1915) in 23S rRNA + S-adenosyl-L-methionine = N(3)-methylpseudouridine(1915) in 23S rRNA + S-adenosyl-L-homocysteine + H(+). Its function is as follows. Specifically methylates the pseudouridine at position 1915 (m3Psi1915) in 23S rRNA. This Xanthomonas campestris pv. campestris (strain 8004) protein is Ribosomal RNA large subunit methyltransferase H.